The sequence spans 40 residues: SDGRDAAVIYTESDVIARGDCKPCMHPDCRFNPGRCRPRE.

A propeptide spanning residues Ser-1–Arg-18 is cleaved from the precursor. Cystine bridges form between Cys-21/Cys-36 and Cys-24/Cys-29.

This sequence belongs to the conotoxin A superfamily. Expressed by the venom duct.

The protein resides in the secreted. In terms of biological role, probable neurotoxin with unknown target. Possibly targets ion channels. This chain is Conotoxin Bt14.16, found in Conus betulinus (Beech cone).